We begin with the raw amino-acid sequence, 259 residues long: Bidirectional sugar transporter SWEET6a (259 aa).

The Extracellular portion of the chain corresponds to M1–N9. A helical membrane pass occupies residues V10–F30. The MtN3/slv 1 domain maps to V10–K98. The Cytoplasmic portion of the chain corresponds to W31–D45. A helical transmembrane segment spans residues P46–H66. At P67 to S69 the chain is on the extracellular side. Residues I70–F90 traverse the membrane as a helical segment. Residues F91–C103 lie on the Cytoplasmic side of the membrane. The helical transmembrane segment at A104 to A124 threads the bilayer. The Extracellular segment spans residues H125–S131. The helical transmembrane segment at M132–I152 threads the bilayer. Positions I133–T216 constitute a MtN3/slv 2 domain. Residues M153–M165 lie on the Cytoplasmic side of the membrane. The chain crosses the membrane as a helical span at residues P166–I186. At R187–D189 the chain is on the extracellular side. The chain crosses the membrane as a helical span at residues I190–Y210. At A211–R259 the chain is on the cytoplasmic side.

Belongs to the SWEET sugar transporter family. In terms of assembly, forms homooligomers and/or heterooligomers.

Its subcellular location is the cell membrane. Functionally, mediates both low-affinity uptake and efflux of sugar across the plasma membrane. This is Bidirectional sugar transporter SWEET6a (SWEET6A) from Oryza sativa subsp. indica (Rice).